An 838-amino-acid chain; its full sequence is Probable inorganic carbon transporter subunit DabA (838 aa).

Residues C353, D355, H537, and C552 each contribute to the Zn(2+) site.

The protein belongs to the inorganic carbon transporter (TC 9.A.2) DabA family. Forms a complex with DabB. Zn(2+) serves as cofactor.

The protein resides in the cell membrane. Part of an energy-coupled inorganic carbon pump. This is Probable inorganic carbon transporter subunit DabA from Roseiflexus sp. (strain RS-1).